We begin with the raw amino-acid sequence, 289 residues long: 4-diphosphocytidyl-2-C-methyl-D-erythritol kinase (289 aa).

Residue Lys10 is part of the active site. Position 94 to 104 (94 to 104 (PVAAGLAGGSS)) interacts with ATP. Asp136 is an active-site residue.

Belongs to the GHMP kinase family. IspE subfamily.

It catalyses the reaction 4-CDP-2-C-methyl-D-erythritol + ATP = 4-CDP-2-C-methyl-D-erythritol 2-phosphate + ADP + H(+). It functions in the pathway isoprenoid biosynthesis; isopentenyl diphosphate biosynthesis via DXP pathway; isopentenyl diphosphate from 1-deoxy-D-xylulose 5-phosphate: step 3/6. In terms of biological role, catalyzes the phosphorylation of the position 2 hydroxy group of 4-diphosphocytidyl-2C-methyl-D-erythritol. The protein is 4-diphosphocytidyl-2-C-methyl-D-erythritol kinase of Bacillus mycoides (strain KBAB4) (Bacillus weihenstephanensis).